Consider the following 666-residue polypeptide: Secreted protein ARB_01864 (666 aa).

Positions M1–A18 are cleaved as a signal peptide. 7 N-linked (GlcNAc...) asparagine glycosylation sites follow: N160, N216, N342, N405, N594, N600, and N662. A disordered region spans residues R323–P353.

Its subcellular location is the secreted. In Arthroderma benhamiae (strain ATCC MYA-4681 / CBS 112371) (Trichophyton mentagrophytes), this protein is Secreted protein ARB_01864.